Reading from the N-terminus, the 459-residue chain is FBD-associated F-box protein At1g61320 (459 aa).

Residues 1–25 (MAPPTKRTRVEMAESSNKRMKPSET) form a disordered region. The region spanning 21 to 69 (KPSETVPEDVLELMMSTYLPVQSLLTTRVLSKRFRETEVRSLDLDFSGI) is the F-box domain. Residues 396 to 428 (VKIIGYKGHWHELDIVEFFVKNAPSLKRLELQM) form the FBD domain.

The sequence is that of FBD-associated F-box protein At1g61320 from Arabidopsis thaliana (Mouse-ear cress).